Here is a 367-residue protein sequence, read N- to C-terminus: Glutamate 5-kinase (367 aa).

Lysine 10 serves as a coordination point for ATP. Substrate is bound by residues serine 50, aspartate 137, and asparagine 149. 169-170 lines the ATP pocket; the sequence is TD. A PUA domain is found at 275 to 353; it reads AGEITVDEGA…QQIDAILGYE (79 aa).

This sequence belongs to the glutamate 5-kinase family.

The protein resides in the cytoplasm. The catalysed reaction is L-glutamate + ATP = L-glutamyl 5-phosphate + ADP. It participates in amino-acid biosynthesis; L-proline biosynthesis; L-glutamate 5-semialdehyde from L-glutamate: step 1/2. Functionally, catalyzes the transfer of a phosphate group to glutamate to form L-glutamate 5-phosphate. This chain is Glutamate 5-kinase, found in Salmonella paratyphi B (strain ATCC BAA-1250 / SPB7).